A 1312-amino-acid polypeptide reads, in one-letter code: Probable histone-lysine N-methyltransferase lin-59 (1312 aa).

Composition is skewed to polar residues over residues 1-11 and 25-36; these read MHGAGEQQQRY and STSSHQYQQQGA. Disordered stretches follow at residues 1 to 41, 54 to 81, 154 to 223, 312 to 435, and 524 to 556; these read MHGA…QMHQ, TTTS…RQQG, QPSG…KPVD, EESK…PPPV, and KDNI…EPSE. Positions 54 to 68 are enriched in low complexity; it reads TTTSAAASTSSSGGS. The segment covering 69-78 has biased composition (gly residues); the sequence is NSSGGSGGHR. Over residues 160–176 the composition is skewed to low complexity; it reads PMSSNAPATTSSATPDS. Acidic residues predominate over residues 200 to 210; it reads DHDDEEDDDGP. The span at 312-321 shows a compositional bias: basic and acidic residues; the sequence is EESKKKKDME. Residues 344-367 show a composition bias toward polar residues; it reads ATRSTNSPDVTTSNLPEEPSTSTM. Basic and acidic residues predominate over residues 371–382; the sequence is KENEDVEKVEGK. The span at 383–394 shows a compositional bias: basic residues; sequence RRGRKPKKRRGF. Basic and acidic residues-rich tracts occupy residues 395–419 and 524–535; these read HKES…DHLP and KDNIKKEVKEES. In terms of domain architecture, AWS spans 590 to 635; sequence APSLTCGCTKGACTSDMDCLNRALRVQCSSDCSVPYCSNRRFWKED. The SET domain occupies 638–750; that stretch reads NKLCVSNGPR…PNAEITVDKS (113 aa). Residues 913–934 form a disordered region; sequence DNAPRARALSTSCPSPVPSKRG. The PHD-type zinc finger occupies 967-1027; the sequence is AVRCICGALD…EYICDFCTNK (61 aa). The BAH domain maps to 1100 to 1223; the sequence is NKYRFPKAAT…KTQRVFEKVP (124 aa). Residues 1248-1295 form a disordered region; that stretch reads RDFRPYDPSNPSPKPPKTSSIPSTSSIDPPQSSSDGLPEVDTKKLSKR. A compositionally biased stretch (low complexity) spans 1264-1281; sequence KTSSIPSTSSIDPPQSSS.

It belongs to the class V-like SAM-binding methyltransferase superfamily. Histone-lysine methyltransferase family. SET2 subfamily. In terms of tissue distribution, widely expressed throughout embryonic development and into adulthood.

Its subcellular location is the nucleus. It carries out the reaction L-lysyl-[histone] + S-adenosyl-L-methionine = N(6)-methyl-L-lysyl-[histone] + S-adenosyl-L-homocysteine + H(+). Probable histone methyltransferase. Essential protein required to maintain expression of homeotic genes egl-5 and mab-5. May play an analogous role to the trithorax Group (trxG) proteins. TrxG proteins form multiprotein complexes that are required to maintain the transcriptionally active state of homeotic genes throughout development. May act via a modification of chromatin. The sequence is that of Probable histone-lysine N-methyltransferase lin-59 (lin-59) from Caenorhabditis elegans.